The chain runs to 229 residues: Large ribosomal subunit protein uL1 (229 aa).

The protein belongs to the universal ribosomal protein uL1 family. Part of the 50S ribosomal subunit.

In terms of biological role, binds directly to 23S rRNA. The L1 stalk is quite mobile in the ribosome, and is involved in E site tRNA release. Its function is as follows. Protein L1 is also a translational repressor protein, it controls the translation of the L11 operon by binding to its mRNA. The chain is Large ribosomal subunit protein uL1 from Ureaplasma urealyticum serovar 10 (strain ATCC 33699 / Western).